The chain runs to 57 residues: MTILKWALIFLVISVIAGIFGFTGISAASADLARILFYIFAVIFIVLLILGFTIFRT.

The next 2 membrane-spanning stretches (helical) occupy residues 6–26 and 35–55; these read WALI…TGIS and ILFY…FTIF.

This sequence belongs to the UPF0391 family.

The protein resides in the cell membrane. In Rhodopseudomonas palustris (strain HaA2), this protein is UPF0391 membrane protein RPB_2510.